The following is a 112-amino-acid chain: Putative inner membrane protein YafU (112 aa).

Residues 1–21 (MSSERDLVNFLGDFSMDVAKA) lie on the Cytoplasmic side of the membrane. Residues 22 to 42 (VIAGGVATAIGSLASFACVSF) form a helical membrane-spanning segment. Glycine 43 is a topological domain (periplasmic). The chain crosses the membrane as a helical span at residues 44–64 (FPVILVGGAILLTGIVCTVVL). At 65–112 (NEIDAQCHLSEKLKYAIRDGLKRQQELDKWKRENMTPFMYVLNTPPVI) the chain is on the cytoplasmic side.

The protein resides in the cell inner membrane. In Escherichia coli (strain K12), this protein is Putative inner membrane protein YafU (yafU).